The primary structure comprises 307 residues: Mitochondrial thiamine pyrophosphate carrier 1 (307 aa).

Solcar repeat units lie at residues 13 to 95 (VSTT…IGSF), 105 to 190 (SPQL…IKIF), and 203 to 305 (PFTL…FMNK). 6 helical membrane-spanning segments follow: residues 19–36 (LVAG…IAPL), 76–96 (IMYI…GSFL), 108–126 (LYSC…LASY), 160–184 (MGFF…FGVY), 210–226 (LAGP…TFPL), and 280–297 (GVTM…ISLW).

This sequence belongs to the mitochondrial carrier (TC 2.A.29) family.

Its subcellular location is the mitochondrion inner membrane. In terms of biological role, mitochondrial transporter that mediates uptake of thiamine pyrophosphate (ThPP) into mitochondria. The sequence is that of Mitochondrial thiamine pyrophosphate carrier 1 (TPC1) from Candida glabrata (strain ATCC 2001 / BCRC 20586 / JCM 3761 / NBRC 0622 / NRRL Y-65 / CBS 138) (Yeast).